The primary structure comprises 222 residues: Eukaryotic translation initiation factor 3 subunit K (222 aa).

The PCI domain maps to 46-208; that stretch reads YDLEANLAVL…KIKTKNITEK (163 aa).

Belongs to the eIF-3 subunit K family. Component of the eukaryotic translation initiation factor 3 (eIF-3) complex. The eIF-3 complex interacts with pix.

The protein localises to the cytoplasm. Its function is as follows. Component of the eukaryotic translation initiation factor 3 (eIF-3) complex, which is involved in protein synthesis of a specialized repertoire of mRNAs and, together with other initiation factors, stimulates binding of mRNA and methionyl-tRNAi to the 40S ribosome. The eIF-3 complex specifically targets and initiates translation of a subset of mRNAs involved in cell proliferation. This Drosophila willistoni (Fruit fly) protein is Eukaryotic translation initiation factor 3 subunit K.